Consider the following 389-residue polypeptide: Glutaryl-CoA dehydrogenase (389 aa).

2 residues coordinate substrate: Arg-87 and Asn-91. Residues 126–129 (FGIT), Ser-135, and 159–161 (WIS) contribute to the FAD site. Substrate is bound at residue Ser-135. Ser-181 lines the substrate pocket. FAD is bound by residues Arg-271, 281 to 284 (FQMN), Arg-340, Ala-344, and 367 to 371 (EGSAN). The Proton acceptor role is filled by Glu-367. Arg-385 contributes to the substrate binding site.

It belongs to the acyl-CoA dehydrogenase family. As to quaternary structure, homotetramer. It depends on FAD as a cofactor.

It catalyses the reaction glutaryl-CoA + A = (2E)-glutaconyl-CoA + AH2. The protein operates within aromatic compound metabolism; benzoyl-CoA degradation. With respect to regulation, inhibited by glutaconyl-CoA. Functionally, catalyzes the dehydrogenation of Glutaryl-CoA to glutaconyl-CoA. This Desulfococcus multivorans protein is Glutaryl-CoA dehydrogenase (Acd).